A 91-amino-acid polypeptide reads, in one-letter code: CLAVATA3/ESR (CLE)-related protein 27 (91 aa).

The N-terminal stretch at 1–35 (MTHAREWRSSLTTTLLMVILLSYMLHLFCVYSRVG) is a signal peptide. Hydroxyproline occurs at positions 83 and 86. A glycan (O-linked (Ara...) hydroxyproline) is linked at Pro86.

This sequence belongs to the CLV3/ESR signal peptide family. In terms of processing, the O-glycosylation (arabinosylation) of the hydroxyproline Pro-86 enhances binding affinity of the CLE27p peptide for its receptor. In terms of tissue distribution, mostly expressed in apex, and, to a lower extent, in roots, leaves, flowers and siliques.

It is found in the secreted. The protein localises to the extracellular space. Extracellular signal peptide that regulates cell fate. Represses root apical meristem maintenance. The polypeptide is CLAVATA3/ESR (CLE)-related protein 27 (Arabidopsis thaliana (Mouse-ear cress)).